A 307-amino-acid chain; its full sequence is Regulating synaptic membrane exocytosis protein 3 (307 aa).

The segment at S86–T120 is disordered. A compositionally biased stretch (polar residues) spans D109–G119. The 119-residue stretch at P155–Y273 folds into the C2 domain. Residues S294 and S297 each carry the phosphoserine modification.

In terms of assembly, binds PPFIA3. Does not bind RAB3. As to expression, expressed exclusively in brain with significant levels in cortex, cerebellum and olfactory bulb. Detected at lower level in hippocampus.

It is found in the synapse. In terms of biological role, regulates synaptic membrane exocytosis. In Rattus norvegicus (Rat), this protein is Regulating synaptic membrane exocytosis protein 3 (Rims3).